The primary structure comprises 207 residues: Guanylate kinase (207 aa).

In terms of domain architecture, Guanylate kinase-like spans Gly-4–Arg-184. An ATP-binding site is contributed by Ala-11–Ser-18.

It belongs to the guanylate kinase family.

Its subcellular location is the cytoplasm. The enzyme catalyses GMP + ATP = GDP + ADP. Functionally, essential for recycling GMP and indirectly, cGMP. This is Guanylate kinase from Salmonella paratyphi A (strain ATCC 9150 / SARB42).